The chain runs to 905 residues: Alanine--tRNA ligase (905 aa).

Residues His582, His586, Cys687, and His691 each contribute to the Zn(2+) site.

It belongs to the class-II aminoacyl-tRNA synthetase family. The cofactor is Zn(2+).

The protein resides in the cytoplasm. It catalyses the reaction tRNA(Ala) + L-alanine + ATP = L-alanyl-tRNA(Ala) + AMP + diphosphate. Functionally, catalyzes the attachment of alanine to tRNA(Ala) in a two-step reaction: alanine is first activated by ATP to form Ala-AMP and then transferred to the acceptor end of tRNA(Ala). Also edits incorrectly charged Ser-tRNA(Ala) and Gly-tRNA(Ala) via its editing domain. This chain is Alanine--tRNA ligase, found in Mycoplasma mobile (strain ATCC 43663 / 163K / NCTC 11711) (Mesomycoplasma mobile).